Here is a 149-residue protein sequence, read N- to C-terminus: Small heat shock protein IbpB (149 aa).

In terms of domain architecture, sHSP spans 26 to 137 (SQEPIDFPPY…QPQRIAIGGG (112 aa)).

This sequence belongs to the small heat shock protein (HSP20) family. Homodimer. Forms homomultimers of about 100-150 subunits at optimal growth temperatures. Conformation changes to oligomers at high temperatures or high ionic concentrations. The decrease in size of the multimers is accompanied by an increase in chaperone activity.

It localises to the cytoplasm. In terms of biological role, associates with aggregated proteins, together with IbpA, to stabilize and protect them from irreversible denaturation and extensive proteolysis during heat shock and oxidative stress. Aggregated proteins bound to the IbpAB complex are more efficiently refolded and reactivated by the ATP-dependent chaperone systems ClpB and DnaK/DnaJ/GrpE. Its activity is ATP-independent. This is Small heat shock protein IbpB from Pectobacterium carotovorum subsp. carotovorum (strain PC1).